The following is an 872-amino-acid chain: MVANGHFAGVGDVLDAKNYEHGVQVIDEEKEFNPNLSNYLSYENVTPAGFNYHLISVFGSQSTGKSTLLNSLFGTHFSVMSETERRQTTKGIWLSKNKRLKSDKGQDNQTKMADNILVMDVEGTDGRERGEDQDFERKSALFALATSEVLIVNIWEHQVGLYQGANMGLLKTVFEVNLELFLKDKRSNPRSLLFFVIRDFLGTTPLQNLQNTLLQDLNRIWNSLSKPAGLENSSITDYFDFAFAGLPHKNFQPEKFVDEVRKLSTRFCDGHRDPNKTDAKGTGSIEGGIFLPEYHRRIPADGFAVYAEGIWDQIVNNKDLDLPTQQELLAQFRCDEISREVLVAFDEAISPFEAKQAEAVQAGNPQVLGGLGSAMCNARMKSVKNFDTEASRYHKRVYQMKKSELQDKIDSRLKALFLGQLSAAHRSGIQEFTESVTAAVKAGQKRGASYDFAEIVTKERKLAIEKFEKEARAAVVEDTQWSNYQQELSLYQKDLENIGGQLRRDEMRRLATRVGRWVRSRLGESIDLEFNAIGSGRGGSGAPEFGDKPSEKSLWDRVWTLFVDTVLDAERRFTERASSFDASIDEVDVGLWRLRRKSWGVLRAKIDEEMMEGNILLKLRENFEDKFRYDDAGVPRIWRPNDDIESIYTRARESTLTLIPLLSRFRLAETNAPPPLDKWIGHTPSSATPADEEDLTPIGGVDEDEGKSLEEEMTMIGEAKKQDLTVRFKKTADGVYVEAKRSAIGGITQVPLYFYGLLLALGWNEIVAVLRNPAYFLLLFVCAVTAYVTYQLNLWGPIIKMTEAASQQALMEGKTRLREFLEASDTGLQAMAMSKGRNAEEYDMSNMKNRKSAGGFQNNRSHIDDADDDDDF.

The Cytoplasmic portion of the chain corresponds to 1–749; it reads MVANGHFAGV…KRSAIGGITQ (749 aa). The GB1/RHD3-type G domain occupies 49 to 307; it reads GFNYHLISVF…IPADGFAVYA (259 aa). 59-66 lines the GTP pocket; sequence GSQSTGKS. Residues 482–504 adopt a coiled-coil conformation; the sequence is SNYQQELSLYQKDLENIGGQLRR. A disordered region spans residues 676 to 704; the sequence is LDKWIGHTPSSATPADEEDLTPIGGVDED. Residues 690-704 show a composition bias toward acidic residues; the sequence is ADEEDLTPIGGVDED. The helical transmembrane segment at 750–770 threads the bilayer; sequence VPLYFYGLLLALGWNEIVAVL. The Lumenal portion of the chain corresponds to 771–773; the sequence is RNP. A helical transmembrane segment spans residues 774-794; it reads AYFLLLFVCAVTAYVTYQLNL. The Cytoplasmic portion of the chain corresponds to 795–872; sequence WGPIIKMTEA…IDDADDDDDF (78 aa). The disordered stretch occupies residues 849–872; that stretch reads NRKSAGGFQNNRSHIDDADDDDDF.

It belongs to the TRAFAC class dynamin-like GTPase superfamily. GB1/RHD3 GTPase family. RHD3 subfamily.

It localises to the endoplasmic reticulum membrane. Functionally, cooperates with the reticulon proteins and tubule-shaping DP1 family proteins to generate and maintain the structure of the tubular endoplasmic reticulum network. Has GTPase activity, which is required for its function in ER organization. In Paracoccidioides brasiliensis (strain Pb18), this protein is Protein SEY1.